We begin with the raw amino-acid sequence, 65 residues long: Large ribosomal subunit protein bL35 (65 aa).

Belongs to the bacterial ribosomal protein bL35 family.

The protein is Large ribosomal subunit protein bL35 of Thermoanaerobacter pseudethanolicus (strain ATCC 33223 / 39E) (Clostridium thermohydrosulfuricum).